The following is a 510-amino-acid chain: UDP-galactopyranose mutase (510 aa).

Positions 18, 38, 46, and 61 each coordinate FAD. Residues Gly61 and Gly62 each coordinate UDP-alpha-D-galactose. His63 is a binding site for FAD. NADH is bound by residues His68, Arg91, and Ser93. NADPH-binding residues include His68, Arg91, Ser93, and Tyr104. Tyr104, Gln107, Met159, Tyr162, Asn163, Trp167, and Arg182 together coordinate UDP-alpha-D-galactose. Asn203 lines the NADPH pocket. Asn207 is a UDP-alpha-D-galactose binding site. An FAD-binding site is contributed by Val242. 2 residues coordinate NADPH: Trp315 and Tyr317. Positions 317, 327, and 419 each coordinate UDP-alpha-D-galactose. Arg327 provides a ligand contact to FAD. Residues Tyr419 and Arg447 each contribute to the NADH site. NADPH contacts are provided by Tyr419 and Arg447. Arg447 lines the FAD pocket. Residue Tyr453 participates in UDP-alpha-D-galactose binding. Residues Gly456, Asn457, and Gln458 each contribute to the FAD site. Asn457 contributes to the UDP-alpha-D-galactose binding site. Residue Asn457 participates in NADH binding. Asn457 provides a ligand contact to NADPH. His460 provides a ligand contact to NADPH. Ser461 provides a ligand contact to FAD.

This sequence belongs to the UDP-galactopyranose/dTDP-fucopyranose mutase family. As to quaternary structure, homotetramer. FAD serves as cofactor.

The catalysed reaction is UDP-alpha-D-galactose = UDP-alpha-D-galactofuranose. UDP-galactopyranose mutase, key flavoenzyme of galactofuranose metabolism that catalyzes the 6-to-5 ring contraction of UDP-galactopyranose to UDP-galactofuranose, the donor used by various galacto-furanosyltransferases. Controls the biosynthesis of galactomannan and galactofuranose containing glycoconjugates. The flavin functions as nucleophile, forming a flavin-sugar adduct that facilitates galactose-ring opening and contraction. The binding of UDP-galactopyranose induces profound conformational changes in the enzyme and two loops on opposite sides of the active site move toward each other by over 10 Angstroms to cover the substrate and create a closed active site. In Aspergillus fumigatus (Neosartorya fumigata), this protein is UDP-galactopyranose mutase.